The following is a 443-amino-acid chain: Ribosomal protein uS12 methylthiotransferase RimO (443 aa).

The 111-residue stretch at 10-120 folds into the MTTase N-terminal domain; sequence PRVGFVSLGC…VVKAVHQHLP (111 aa). Positions 19, 55, 84, 151, 155, and 158 each coordinate [4Fe-4S] cluster. The 239-residue stretch at 137–375 folds into the Radical SAM core domain; sequence LTPAHYAYLK…DFQEDISTQR (239 aa). Positions 377–443 constitute a TRAM domain; the sequence is ERWIGRDITV…VHDLYARPLP (67 aa).

It belongs to the methylthiotransferase family. RimO subfamily. [4Fe-4S] cluster is required as a cofactor.

The protein localises to the cytoplasm. It catalyses the reaction L-aspartate(89)-[ribosomal protein uS12]-hydrogen + (sulfur carrier)-SH + AH2 + 2 S-adenosyl-L-methionine = 3-methylsulfanyl-L-aspartate(89)-[ribosomal protein uS12]-hydrogen + (sulfur carrier)-H + 5'-deoxyadenosine + L-methionine + A + S-adenosyl-L-homocysteine + 2 H(+). In terms of biological role, catalyzes the methylthiolation of an aspartic acid residue of ribosomal protein uS12. In Aromatoleum aromaticum (strain DSM 19018 / LMG 30748 / EbN1) (Azoarcus sp. (strain EbN1)), this protein is Ribosomal protein uS12 methylthiotransferase RimO.